A 195-amino-acid polypeptide reads, in one-letter code: MAAQTAASEAPAPAAAPADSPTTAGPTPDSVGRDLVAENMIKDYVLAAVAASIVPVPLFDIAAVVAIELRMIQKLSELYGKPFSESLGRSVIASLAGGVVGYGAGMAVAVSLTKLIPGVGWMLGMVSLPVIAGATTYAIGRVFVKHYENGGDIFNLSADAMRAYYKQQFEKGKALAAKVKARKEAAAVDDVAAAH.

A compositionally biased stretch (low complexity) spans 1–28 (MAAQTAASEAPAPAAAPADSPTTAGPTP). Positions 1–31 (MAAQTAASEAPAPAAAPADSPTTAGPTPDSV) are disordered. 3 helical membrane passes run 45–65 (VLAA…AAVV), 90–110 (SVIA…AVAV), and 115–135 (LIPG…AGAT).

It is found in the magnetosome membrane. This is Magnetosome membrane protein 22 from Magnetospirillum gryphiswaldense (strain DSM 6361 / JCM 21280 / NBRC 15271 / MSR-1).